A 352-amino-acid chain; its full sequence is Lipopolysaccharide core biosynthesis mannosyltransferase LpcC (352 aa).

It belongs to the glycosyltransferase group 1 family. Glycosyltransferase 4 subfamily.

Its pathway is bacterial outer membrane biogenesis; LPS core biosynthesis. In terms of biological role, acts at transfer of mannose group to a 3-deoxy-D-mono octulonic acid (KDO) via an alpha-1,5 linkage. The polypeptide is Lipopolysaccharide core biosynthesis mannosyltransferase LpcC (lpcC) (Rhizobium leguminosarum bv. viciae).